The chain runs to 341 residues: Adenosine deaminase (341 aa).

Residues histidine 15 and histidine 17 each coordinate Zn(2+). The substrate site is built by histidine 17, aspartate 19, and glycine 172. Residue histidine 199 coordinates Zn(2+). The active-site Proton donor is the glutamate 202. Aspartate 279 serves as a coordination point for Zn(2+).

This sequence belongs to the metallo-dependent hydrolases superfamily. Adenosine and AMP deaminases family. Adenosine deaminase subfamily. Requires Zn(2+) as cofactor.

It catalyses the reaction adenosine + H2O + H(+) = inosine + NH4(+). The enzyme catalyses 2'-deoxyadenosine + H2O + H(+) = 2'-deoxyinosine + NH4(+). Functionally, catalyzes the hydrolytic deamination of adenosine and 2-deoxyadenosine. This chain is Adenosine deaminase, found in Streptococcus equi subsp. zooepidemicus (strain MGCS10565).